Here is a 206-residue protein sequence, read N- to C-terminus: ATP-dependent Clp protease proteolytic subunit (206 aa).

The Nucleophile role is filled by Ser-110. The active site involves His-135.

It belongs to the peptidase S14 family. In terms of assembly, fourteen ClpP subunits assemble into 2 heptameric rings which stack back to back to give a disk-like structure with a central cavity, resembling the structure of eukaryotic proteasomes.

It is found in the cytoplasm. The catalysed reaction is Hydrolysis of proteins to small peptides in the presence of ATP and magnesium. alpha-casein is the usual test substrate. In the absence of ATP, only oligopeptides shorter than five residues are hydrolyzed (such as succinyl-Leu-Tyr-|-NHMec, and Leu-Tyr-Leu-|-Tyr-Trp, in which cleavage of the -Tyr-|-Leu- and -Tyr-|-Trp bonds also occurs).. Its function is as follows. Cleaves peptides in various proteins in a process that requires ATP hydrolysis. Has a chymotrypsin-like activity. Plays a major role in the degradation of misfolded proteins. The sequence is that of ATP-dependent Clp protease proteolytic subunit from Edwardsiella ictaluri (strain 93-146).